We begin with the raw amino-acid sequence, 139 residues long: Large-conductance mechanosensitive channel (139 aa).

The next 2 membrane-spanning stretches (helical) occupy residues 19 to 39 (VAVI…ADVI) and 81 to 101 (GNFL…FMVV).

The protein belongs to the MscL family. As to quaternary structure, homopentamer.

Its subcellular location is the cell inner membrane. Channel that opens in response to stretch forces in the membrane lipid bilayer. May participate in the regulation of osmotic pressure changes within the cell. The polypeptide is Large-conductance mechanosensitive channel (Nitrobacter hamburgensis (strain DSM 10229 / NCIMB 13809 / X14)).